Here is a 185-residue protein sequence, read N- to C-terminus: Large ribosomal subunit protein bL25 (185 aa).

This sequence belongs to the bacterial ribosomal protein bL25 family. CTC subfamily. As to quaternary structure, part of the 50S ribosomal subunit; part of the 5S rRNA/L5/L18/L25 subcomplex. Contacts the 5S rRNA. Binds to the 5S rRNA independently of L5 and L18.

This is one of the proteins that binds to the 5S RNA in the ribosome where it forms part of the central protuberance. This is Large ribosomal subunit protein bL25 from Chlamydia muridarum (strain MoPn / Nigg).